A 215-amino-acid chain; its full sequence is uncharacterized protein (215 aa).

2 consecutive transmembrane segments (helical) span residues 40 to 60 (VLFPIPVFCSIKVLLDYFCSL) and 72 to 92 (LIWFYVLSVILCKSLFAVGYL).

The protein localises to the mitochondrion membrane. This is an uncharacterized protein from Arabidopsis thaliana (Mouse-ear cress).